The sequence spans 263 residues: Small ribosomal subunit protein uS2 (263 aa).

The tract at residues 228-263 is disordered; the sequence is QLEEPEADLADEDDNGMTTSDDGDAEALDIPDDSDA. Residues 230–263 show a composition bias toward acidic residues; sequence EEPEADLADEDDNGMTTSDDGDAEALDIPDDSDA.

Belongs to the universal ribosomal protein uS2 family.

This chain is Small ribosomal subunit protein uS2, found in Thermosynechococcus vestitus (strain NIES-2133 / IAM M-273 / BP-1).